Consider the following 1300-residue polypeptide: ATP-dependent RNA helicase HrpA (1300 aa).

Positions 87–250 (LEAIRDHQVV…FNNAPIIEVS (164 aa)) constitute a Helicase ATP-binding domain. Residue 100–107 (GETGSGKT) participates in ATP binding. The DEAH box motif lies at 197-200 (DEAH). A Helicase C-terminal domain is found at 274–444 (QLQAIFDAVD…SVILQMTALG (171 aa)).

The protein belongs to the DEAD box helicase family. DEAH subfamily.

It catalyses the reaction ATP + H2O = ADP + phosphate + H(+). Not yet known. The protein is ATP-dependent RNA helicase HrpA (hrpA) of Escherichia coli (strain K12).